The primary structure comprises 260 residues: Imidazole glycerol phosphate synthase subunit HisF (260 aa).

Catalysis depends on residues Asp11 and Asp130.

The protein belongs to the HisA/HisF family. As to quaternary structure, heterodimer of HisH and HisF.

It is found in the cytoplasm. The catalysed reaction is 5-[(5-phospho-1-deoxy-D-ribulos-1-ylimino)methylamino]-1-(5-phospho-beta-D-ribosyl)imidazole-4-carboxamide + L-glutamine = D-erythro-1-(imidazol-4-yl)glycerol 3-phosphate + 5-amino-1-(5-phospho-beta-D-ribosyl)imidazole-4-carboxamide + L-glutamate + H(+). It participates in amino-acid biosynthesis; L-histidine biosynthesis; L-histidine from 5-phospho-alpha-D-ribose 1-diphosphate: step 5/9. In terms of biological role, IGPS catalyzes the conversion of PRFAR and glutamine to IGP, AICAR and glutamate. The HisF subunit catalyzes the cyclization activity that produces IGP and AICAR from PRFAR using the ammonia provided by the HisH subunit. This chain is Imidazole glycerol phosphate synthase subunit HisF, found in Thermomicrobium roseum (strain ATCC 27502 / DSM 5159 / P-2).